A 213-amino-acid chain; its full sequence is Ribosome maturation factor RimM (213 aa).

The 77-residue stretch at 99–175 folds into the PRC barrel domain; that stretch reads DQDAAYISDL…RITMRLPEGL (77 aa). Residues 182-213 are disordered; the sequence is TATAREPRARRTRKRGLRKPITGADATPPDSQ. The segment covering 189 to 199 has biased composition (basic residues); sequence RARRTRKRGLR.

The protein belongs to the RimM family. Binds ribosomal protein uS19.

It is found in the cytoplasm. Functionally, an accessory protein needed during the final step in the assembly of 30S ribosomal subunit, possibly for assembly of the head region. Essential for efficient processing of 16S rRNA. May be needed both before and after RbfA during the maturation of 16S rRNA. It has affinity for free ribosomal 30S subunits but not for 70S ribosomes. The chain is Ribosome maturation factor RimM from Acidobacterium capsulatum (strain ATCC 51196 / DSM 11244 / BCRC 80197 / JCM 7670 / NBRC 15755 / NCIMB 13165 / 161).